The sequence spans 655 residues: Spastin (655 aa).

Residues 1–58 (MLFDLINSFLKNGINNSNNNNNNNNNKNNFYNSLEDDDYLLNNQTTKVSLYLYFFIFA) lie on the Cytoplasmic side of the membrane. The helical intramembrane region spans 59–79 (FMFLVVDLIMLYYKHRENIES). At 80-655 (RETDLSLKLN…EKWNQKFGTI (576 aa)) the chain is on the cytoplasmic side. Over residues 102-140 (KSSPTTSTTTTTITPTTTSSSQLRQPSTPKTTTKTINSP) the composition is skewed to low complexity. Residues 102-151 (KSSPTTSTTTTTITPTTTSSSQLRQPSTPKTTTKTINSPPSTPKSPPPLP) form a disordered region. Over residues 141 to 151 (PSTPKSPPPLP) the composition is skewed to pro residues. The MIT domain occupies 169 to 232 (LNEAKSQIDS…KRAEYLKNEL (64 aa)). A disordered region spans residues 261–325 (EQQQQQQQQS…TITSPGNKYG (65 aa)). The segment covering 262-320 (QQQQQQQQSSSTYRNSLNLSSSKSNSTINNRHSISSLSSLNSTTATTTTPSNTSTITSP) has biased composition (low complexity). 424 to 431 (GPPGNGKT) provides a ligand contact to ATP.

Belongs to the AAA ATPase family. Spastin subfamily. In terms of assembly, homohexamer. The homohexamer is stabilized by ATP-binding. The homohexamer may adopt a ring conformation through which microtubules pass prior to being severed. Interacts with microtubules.

It localises to the membrane. It is found in the cytoplasm. The protein resides in the cytoskeleton. The protein localises to the microtubule organizing center. Its subcellular location is the centrosome. The enzyme catalyses n ATP + n H2O + a microtubule = n ADP + n phosphate + (n+1) alpha/beta tubulin heterodimers.. ATP-dependent microtubule severing protein. Microtubule severing may promote reorganization of cellular microtubule arrays and the release of microtubules from the microtubule organizing center following nucleation. In Dictyostelium discoideum (Social amoeba), this protein is Spastin.